A 50-amino-acid chain; its full sequence is AANPHLCGSHLVEALYLVCGERGFFYQPKGIHZZCCHKPCBIFZLZBYCN.

Intrachain disulfides connect Cys-7-Cys-36, Cys-19-Cys-49, and Cys-35-Cys-40.

It belongs to the insulin family. Heterodimer of a B chain and an A chain linked by two disulfide bonds.

The protein localises to the secreted. Its function is as follows. Insulin decreases blood glucose concentration. It increases cell permeability to monosaccharides, amino acids and fatty acids. It accelerates glycolysis, the pentose phosphate cycle, and glycogen synthesis in liver. This chain is Insulin (ins), found in Katsuwonus pelamis (Skipjack tuna).